The sequence spans 102 residues: ATP-dependent Clp protease adapter protein ClpS (102 aa).

This sequence belongs to the ClpS family. In terms of assembly, binds to the N-terminal domain of the chaperone ClpA.

Functionally, involved in the modulation of the specificity of the ClpAP-mediated ATP-dependent protein degradation. The protein is ATP-dependent Clp protease adapter protein ClpS of Desulfotalea psychrophila (strain LSv54 / DSM 12343).